Reading from the N-terminus, the 145-residue chain is D-aminoacyl-tRNA deacylase (145 aa).

The Gly-cisPro motif, important for rejection of L-amino acids motif lies at 137–138; that stretch reads GP.

It belongs to the DTD family. In terms of assembly, homodimer.

It is found in the cytoplasm. The enzyme catalyses glycyl-tRNA(Ala) + H2O = tRNA(Ala) + glycine + H(+). It catalyses the reaction a D-aminoacyl-tRNA + H2O = a tRNA + a D-alpha-amino acid + H(+). Its function is as follows. An aminoacyl-tRNA editing enzyme that deacylates mischarged D-aminoacyl-tRNAs. Also deacylates mischarged glycyl-tRNA(Ala), protecting cells against glycine mischarging by AlaRS. Acts via tRNA-based rather than protein-based catalysis; rejects L-amino acids rather than detecting D-amino acids in the active site. By recycling D-aminoacyl-tRNA to D-amino acids and free tRNA molecules, this enzyme counteracts the toxicity associated with the formation of D-aminoacyl-tRNA entities in vivo and helps enforce protein L-homochirality. The sequence is that of D-aminoacyl-tRNA deacylase from Lactobacillus delbrueckii subsp. bulgaricus (strain ATCC BAA-365 / Lb-18).